We begin with the raw amino-acid sequence, 92 residues long: Small ribosomal subunit protein uS19c (92 aa).

This sequence belongs to the universal ribosomal protein uS19 family.

It localises to the plastid. The protein localises to the chloroplast. In terms of biological role, protein S19 forms a complex with S13 that binds strongly to the 16S ribosomal RNA. This chain is Small ribosomal subunit protein uS19c, found in Platanus occidentalis (Sycamore).